Here is a 203-residue protein sequence, read N- to C-terminus: Small ribosomal subunit protein uS10m (203 aa).

The transit peptide at 1–14 directs the protein to the mitochondrion; it reads MLRNTIALRSFIRT. At serine 193 the chain carries Phosphoserine.

It belongs to the universal ribosomal protein uS10 family. Component of the mitochondrial small ribosomal subunit (mt-SSU). Mature yeast 74S mitochondrial ribosomes consist of a small (37S) and a large (54S) subunit. The 37S small subunit contains a 15S ribosomal RNA (15S mt-rRNA) and 34 different proteins. The 54S large subunit contains a 21S rRNA (21S mt-rRNA) and 46 different proteins.

The protein localises to the mitochondrion. Component of the mitochondrial ribosome (mitoribosome), a dedicated translation machinery responsible for the synthesis of mitochondrial genome-encoded proteins, including at least some of the essential transmembrane subunits of the mitochondrial respiratory chain. The mitoribosomes are attached to the mitochondrial inner membrane and translation products are cotranslationally integrated into the membrane. The polypeptide is Small ribosomal subunit protein uS10m (RSM10) (Saccharomyces cerevisiae (strain ATCC 204508 / S288c) (Baker's yeast)).